We begin with the raw amino-acid sequence, 166 residues long: Phospholipase A2 inhibitor clone 06/08 (166 aa).

The N-terminal stretch at 1–19 (MRLILLSGLLLLGIFLANG) is a signal peptide. The 116-residue stretch at 46–161 (LRGAFLTVYK…CDDNLLVVCE (116 aa)) folds into the C-type lectin domain. N-linked (GlcNAc...) asparagine glycans are attached at residues Asn61 and Asn122. Cystine bridges form between Cys83/Cys160 and Cys138/Cys152.

This sequence belongs to the alpha-type phospholipase A2 inhibitor family. In terms of assembly, homotrimer; non-covalently linked. As to expression, expressed by the liver.

It localises to the secreted. This phospholipase A2 inhibitor binds directly phospholipase A2 in the presence or absence of calcium. This is Phospholipase A2 inhibitor clone 06/08 from Bothrops neuwiedi (Neuwied's lancehead).